Reading from the N-terminus, the 325-residue chain is Fructose-1,6-bisphosphatase class 1 (325 aa).

Residues Glu84, Asp103, Leu105, and Asp106 each contribute to the Mg(2+) site. Substrate is bound by residues 106–109 (DGSS), Asn196, and Lys262. Glu268 is a binding site for Mg(2+).

The protein belongs to the FBPase class 1 family. Homotetramer. Mg(2+) is required as a cofactor.

The protein resides in the cytoplasm. The catalysed reaction is beta-D-fructose 1,6-bisphosphate + H2O = beta-D-fructose 6-phosphate + phosphate. The protein operates within carbohydrate biosynthesis; gluconeogenesis. This Shewanella baltica (strain OS195) protein is Fructose-1,6-bisphosphatase class 1.